The sequence spans 278 residues: Protein D7 (278 aa).

2 CHHC U11-48K-type zinc fingers span residues 6 to 33 and 40 to 67; these read LMQC…RENN and LATC…EYRV. Residues cysteine 9, histidine 15, histidine 25, cysteine 29, cysteine 43, histidine 49, histidine 59, and cysteine 63 each contribute to the Zn(2+) site. A compositionally biased stretch (polar residues) spans 149 to 164; that stretch reads QVKQNQPEPEPFTSSE. Disordered stretches follow at residues 149–230 and 249–278; these read QVKQ…PKAN and PGGS…WVRK. The span at 165 to 175 shows a compositional bias: basic and acidic residues; it reads RNYDPRSKEPP. Over residues 188-200 the composition is skewed to polar residues; it reads ATTNTNPWCRQTG. Positions 214–225 are enriched in basic and acidic residues; the sequence is SSDEGPRNKEFP.

It belongs to the UPF0224 (FAM112) family.

It is found in the cytoplasm. Involved in oocyte maturation. It is possible that D7 is required at a certain point in the maturation process and that maturation cannot proceed beyond this point unless a threshold amount of D7 protein is provided. The chain is Protein D7 (d7) from Xenopus laevis (African clawed frog).